The sequence spans 295 residues: Ribosomal RNA small subunit methyltransferase A (295 aa).

Asn-33, Val-35, Gly-60, Glu-81, Asp-111, and Asn-129 together coordinate S-adenosyl-L-methionine.

This sequence belongs to the class I-like SAM-binding methyltransferase superfamily. rRNA adenine N(6)-methyltransferase family. RsmA subfamily.

Its subcellular location is the cytoplasm. It carries out the reaction adenosine(1518)/adenosine(1519) in 16S rRNA + 4 S-adenosyl-L-methionine = N(6)-dimethyladenosine(1518)/N(6)-dimethyladenosine(1519) in 16S rRNA + 4 S-adenosyl-L-homocysteine + 4 H(+). Its function is as follows. Specifically dimethylates two adjacent adenosines (A1518 and A1519) in the loop of a conserved hairpin near the 3'-end of 16S rRNA in the 30S particle. May play a critical role in biogenesis of 30S subunits. The sequence is that of Ribosomal RNA small subunit methyltransferase A from Corynebacterium diphtheriae (strain ATCC 700971 / NCTC 13129 / Biotype gravis).